We begin with the raw amino-acid sequence, 434 residues long: Putative F-box/FBD/LRR-repeat protein At1g16940 (434 aa).

Residues 10–66 (HNIINQLPDSLLCEIFFNLPTEEVVKTSLICRRWRYVWQSLPGLDLVINGSKNYDKF) form the F-box domain. LRR repeat units lie at residues 72–99 (FMFL…MMNN), 114–141 (RRYV…KLHR), 164–189 (INFV…TMDK), 204–231 (CLTN…KLNR), 252–277 (DVAY…TISF), and 306–331 (MAVG…VMGF). An FBD domain is found at 336-385 (WGINFSDVPQCVLSSLEFVEVKAREVADMKKLWSYFMENSTVLKKFTLCL).

The sequence is that of Putative F-box/FBD/LRR-repeat protein At1g16940 from Arabidopsis thaliana (Mouse-ear cress).